A 251-amino-acid chain; its full sequence is tRNA pseudouridine synthase A (251 aa).

The Nucleophile role is filled by Asp56. Tyr110 lines the substrate pocket.

It belongs to the tRNA pseudouridine synthase TruA family.

The enzyme catalyses uridine(38/39/40) in tRNA = pseudouridine(38/39/40) in tRNA. Functionally, formation of pseudouridine at positions 38, 39 and 40 in the anticodon stem and loop of transfer RNAs. The polypeptide is tRNA pseudouridine synthase A (Picrophilus torridus (strain ATCC 700027 / DSM 9790 / JCM 10055 / NBRC 100828 / KAW 2/3)).